The primary structure comprises 246 residues: Probable 2-phosphosulfolactate phosphatase (246 aa).

The protein belongs to the ComB family. It depends on Mg(2+) as a cofactor.

It carries out the reaction (2R)-O-phospho-3-sulfolactate + H2O = (2R)-3-sulfolactate + phosphate. The protein is Probable 2-phosphosulfolactate phosphatase of Nostoc punctiforme (strain ATCC 29133 / PCC 73102).